The primary structure comprises 119 residues: U-scoloptoxin(01)-Cw1a (119 aa).

An N-terminal signal peptide occupies residues 1–22 (MSKATNFYLFVLLGVFVALVRT). The Chitin-binding type-2 domain maps to 38-96 (SFSCDGKKPGYYADQQMECQVYHVCTPDNEHAVLLCGPGTIFNQKHLVCDFPSNYACAD). Cys-73 and Cys-86 are disulfide-bonded.

It belongs to the scoloptoxin-01 family. In terms of processing, contains 3 disulfide bonds. In terms of tissue distribution, expressed by the venom gland.

The protein resides in the secreted. The sequence is that of U-scoloptoxin(01)-Cw1a from Cormocephalus westwoodi (Westwood's green centipede).